The sequence spans 174 residues: MTNLSVIAKPYAKAAFEFANEYNLLQEWSKQLKSFAELVQDDAIAAIISSPEISQTEIINTVKDQLDEKFFNFVALVAENKKLSILPEISFQFENIRNVHNNIKVADVTLAYAIDKNTLANLKTKLEEKFSCSIDMNVIIDPVILGGAVIKVGDTVIDDSVSGRIETLKSILLS.

Belongs to the ATPase delta chain family. As to quaternary structure, F-type ATPases have 2 components, F(1) - the catalytic core - and F(0) - the membrane proton channel. F(1) has five subunits: alpha(3), beta(3), gamma(1), delta(1), epsilon(1). F(0) has three main subunits: a(1), b(2) and c(10-14). The alpha and beta chains form an alternating ring which encloses part of the gamma chain. F(1) is attached to F(0) by a central stalk formed by the gamma and epsilon chains, while a peripheral stalk is formed by the delta and b chains.

Its subcellular location is the cell inner membrane. Its function is as follows. F(1)F(0) ATP synthase produces ATP from ADP in the presence of a proton or sodium gradient. F-type ATPases consist of two structural domains, F(1) containing the extramembraneous catalytic core and F(0) containing the membrane proton channel, linked together by a central stalk and a peripheral stalk. During catalysis, ATP synthesis in the catalytic domain of F(1) is coupled via a rotary mechanism of the central stalk subunits to proton translocation. This protein is part of the stalk that links CF(0) to CF(1). It either transmits conformational changes from CF(0) to CF(1) or is implicated in proton conduction. This Francisella philomiragia subsp. philomiragia (strain ATCC 25017 / CCUG 19701 / FSC 153 / O#319-036) protein is ATP synthase subunit delta.